The sequence spans 495 residues: Chromosomal replication initiator protein DnaA (495 aa).

The segment at 1–91 (MTADPDPPFV…ITALSRHLGQ (91 aa)) is domain I, interacts with DnaA modulators. A domain II region spans residues 91–154 (QRVELGVRIA…TPAAEDPNAV (64 aa)). The interval 155–371 (SLNRRYTFDT…GALIRVTAFA (217 aa)) is domain III, AAA+ region. ATP-binding residues include Gly-199, Gly-201, Lys-202, and Thr-203. Residues 372 to 495 (SLNKTPIDKS…TTRIRQRAKR (124 aa)) are domain IV, binds dsDNA.

This sequence belongs to the DnaA family. As to quaternary structure, oligomerizes as a right-handed, spiral filament on DNA at oriC.

The protein resides in the cytoplasm. Its function is as follows. Plays an essential role in the initiation and regulation of chromosomal replication. ATP-DnaA binds to the origin of replication (oriC) to initiate formation of the DNA replication initiation complex once per cell cycle. Binds the DnaA box (a 9 base pair repeat at the origin) and separates the double-stranded (ds)DNA. Forms a right-handed helical filament on oriC DNA; dsDNA binds to the exterior of the filament while single-stranded (ss)DNA is stabiized in the filament's interior. The ATP-DnaA-oriC complex binds and stabilizes one strand of the AT-rich DNA unwinding element (DUE), permitting loading of DNA polymerase. After initiation quickly degrades to an ADP-DnaA complex that is not apt for DNA replication. Binds acidic phospholipids. This chain is Chromosomal replication initiator protein DnaA, found in Mycobacterium sp. (strain JLS).